The sequence spans 249 residues: Proteasome subunit alpha 2 (249 aa).

An N-acetylmethionine modification is found at Met-1.

Belongs to the peptidase T1A family. As to quaternary structure, the 20S proteasome core is composed of 14 alpha and 14 beta subunits that assemble into four stacked heptameric rings, resulting in a barrel-shaped structure. The two inner rings, each composed of seven catalytic beta subunits, are sandwiched by two outer rings, each composed of seven alpha subunits. H.volcanii produces at least 2 types of 20S proteasomes: an alpha1-beta proteasome and a proteasome containing all three subunits (alpha1, alpha2, and beta) that appears to be asymmetrical with homo-oligomeric alpha1 and alpha2 rings positioned on separate ends. The catalytic chamber with the active sites is on the inside of the barrel. Has probably a gated structure, the ends of the cylinder being occluded by the N-termini of the alpha-subunits. Is likely capped at one or both ends by the proteasome regulatory ATPase, PAN.

It is found in the cytoplasm. Its activity is regulated as follows. The formation of the proteasomal ATPase PAN-20S proteasome complex, via the docking of the C-termini of PAN into the intersubunit pockets in the alpha-rings, triggers opening of the gate for substrate entry. Interconversion between the open-gate and close-gate conformations leads to a dynamic regulation of the 20S proteasome proteolysis activity. Component of the proteasome core, a large protease complex with broad specificity involved in protein degradation. The H.volcanii alpha1-beta-alpha2 proteasome is able to cleave oligopeptides after Tyr and thus displays chymotrypsin-like activity. This Haloferax volcanii (strain ATCC 29605 / DSM 3757 / JCM 8879 / NBRC 14742 / NCIMB 2012 / VKM B-1768 / DS2) (Halobacterium volcanii) protein is Proteasome subunit alpha 2.